Consider the following 1318-residue polypeptide: Ubiquitin carboxyl-terminal hydrolase 19 (1318 aa).

Residues 1 to 109 (MSGGASATGP…GACEDPHDLL (109 aa)) are disordered. Residues 1 to 1291 (MSGGASATGP…TTPDEGCLRY (1291 aa)) lie on the Cytoplasmic side of the membrane. The span at 28–44 (DRANQESKDGDPRKETG) shows a compositional bias: basic and acidic residues. Positions 83–94 (PSSSGSASTPQE) are enriched in polar residues. The segment covering 95–107 (EQTKEGACEDPHD) has biased composition (basic and acidic residues). The region spanning 113-202 (TPELLLDWRQ…VPMLTWPSLL (90 aa)) is the CS 1 domain. Residues 234-255 (KAVPPGNDPVSPAMVRSRNPGK) form a disordered region. Serine 244 carries the post-translational modification Phosphoserine. In terms of domain architecture, CS 2 spans 282–384 (LAFVKNDSYE…RQSQRWGGLE (103 aa)). The tract at residues 390–479 (VGGAKVAVPT…PMPHSPVSGD (90 aa)) is disordered. 2 stretches are compositionally biased toward basic and acidic residues: residues 420–436 (EEAR…RSED) and 447–457 (PMEHVTPKPET). Residues 497 to 1214 (TGLVNLGNTC…YAYVLFYRRR (718 aa)) form the USP domain. The active-site Nucleophile is the cysteine 506. Zn(2+) is bound by residues cysteine 791, cysteine 794, cysteine 808, cysteine 811, cysteine 817, cysteine 821, histidine 829, and cysteine 833. The MYND-type zinc-finger motif lies at 791–833 (CAACQRKQQSEDEKLKRCTRCYRVGYCNQLCQKTHWPDHKGLC). Histidine 1165 acts as the Proton acceptor in catalysis. Basic and acidic residues predominate over residues 1218–1232 (VERPPRAGHSEHHPD). The disordered stretch occupies residues 1218 to 1239 (VERPPRAGHSEHHPDLGPAAEA). A helical transmembrane segment spans residues 1292–1312 (FVLGTVAALVALVLNVFYPLV). Topologically, residues 1313-1318 (SQSRWR) are lumenal.

The protein belongs to the peptidase C19 family. As to quaternary structure, interacts with RNF123. Interacts with BIRC2/c-IAP1, BIRC3/c-IAP2 and XIAP/BIRC4. Interacts with HIF1A (via N-terminus). Interacts (via N-terminus) with HSP90AA1; this interaction activates the deubiquitinase activity of USP19.

The protein localises to the endoplasmic reticulum membrane. The enzyme catalyses Thiol-dependent hydrolysis of ester, thioester, amide, peptide and isopeptide bonds formed by the C-terminal Gly of ubiquitin (a 76-residue protein attached to proteins as an intracellular targeting signal).. In terms of biological role, deubiquitinating enzyme that regulates the degradation of various proteins by removing ubiquitin moieties, thereby preventing their proteasomal degradation. Stabilizes RNF123, which promotes CDKN1B degradation and contributes to cell proliferation. Decreases the levels of ubiquitinated proteins during skeletal muscle formation and acts to repress myogenesis. Modulates transcription of major myofibrillar proteins. Also involved in turnover of endoplasmic-reticulum-associated degradation (ERAD) substrates. Mechanistically, deubiquitinates and thereby stabilizes several E3 ligases involved in the ERAD pathway including SYVN1 or MARCHF6. Regulates the stability of other E3 ligases including BIRC2/c-IAP1 and BIRC3/c-IAP2 by preventing their ubiquitination. Required for cells to mount an appropriate response to hypoxia by rescuing HIF1A from degradation in a non-catalytic manner and by mediating the deubiquitination of FUNDC1. Attenuates mitochondrial damage and ferroptosis by targeting and stabilizing NADPH oxidase 4/NOX4. Negatively regulates TNF-alpha- and IL-1beta-triggered NF-kappa-B activation by hydrolyzing 'Lys-27'- and 'Lys-63'-linked polyubiquitin chains from MAP3K7. Modulates also the protein level and aggregation of polyQ-expanded huntingtin/HTT through HSP90AA1. In Homo sapiens (Human), this protein is Ubiquitin carboxyl-terminal hydrolase 19 (USP19).